The sequence spans 1942 residues: GREB1-like protein (1942 aa).

4 disordered regions span residues 76 to 101 (SSNS…YLQG), 235 to 306 (PFSN…GTKT), 325 to 373 (MDGR…HRSW), and 1123 to 1256 (TKTA…RTQV). A compositionally biased stretch (acidic residues) spans 81 to 90 (EDMDDEDDSD). Residues 237-253 (SNSASSSKPSSSSSLSS) show a composition bias toward low complexity. Positions 338–362 (NPLSTPSHGYRTTETGDSPASTAMS) are enriched in polar residues. Over residues 1127-1155 (TSREERPREGERSSGETAEHDDLPMELER) the composition is skewed to basic and acidic residues. The span at 1158–1171 (SNASAATRTSGSTT) shows a compositional bias: low complexity. Positions 1172-1202 (ENGVSSSSILDKPSSQSDPCGSRTMMDSCSS) are enriched in polar residues. The segment covering 1212–1248 (SQAPSSSSTSSFSSASSSSSSSSSPAAQRPSQSTQAP) has biased composition (low complexity). The helical transmembrane segment at 1861–1881 (GVIFSGLLLYLCDSFVVSSLL) threads the bilayer.

This sequence belongs to the GREB1 family.

It localises to the membrane. Its function is as follows. Plays a major role in early metanephros development. The polypeptide is GREB1-like protein (greb1l) (Danio rerio (Zebrafish)).